Reading from the N-terminus, the 374-residue chain is WW domain-binding protein 4 (374 aa).

The Matrin-type zinc finger occupies 11–42 (KFCDYCKCWIADNRPSVEFHERGKNHKENVAR). Polar residues predominate over residues 91–109 (EPTISPVTNTVQPTPTANQ). 2 disordered regions span residues 91 to 126 (EPTISPVTNTVQPTPTANQQKEKKKKKKKKEASKGR) and 188 to 328 (SKWE…EAGA). Residues 112-121 (EKKKKKKKKE) show a composition bias toward basic residues. WW domains lie at 121–154 (EASKGRWVEGVTADGHCYYYDLVTGASQWEKPEG) and 162–195 (TAAKAIWVEGLSEDGYTYYYNTETGESKWEKPDD). 2 stretches are compositionally biased toward basic and acidic residues: residues 188-197 (SKWEKPDDFI) and 205-270 (SSKD…EKTT). S219, S226, and S228 each carry phosphoserine. A compositionally biased stretch (polar residues) spans 315–325 (STENECLSSSE). Positions 355–373 (KKRRIENGKSRNLRQRGED) are interaction with SNRNP200.

In terms of assembly, component of the spliceosome B complex. Associated with U2 snRNPs. Binds splicing factors SNRPB, SNRPC and SF1. Interacts via the WW domains with the Pro-rich domains of KHDRBS1/SAM68. Interacts via the WW domains with the Pro-rich domains of WBP11. Interacts with SNRNP200.

The protein localises to the nucleus. It localises to the nucleus speckle. Involved in pre-mRNA splicing as a component of the spliceosome. May play a role in cross-intron bridging of U1 and U2 snRNPs in the mammalian A complex. This is WW domain-binding protein 4 (Wbp4) from Rattus norvegicus (Rat).